We begin with the raw amino-acid sequence, 180 residues long: MASSMLSSATMVASPAQATMVAPFNGLKSSAAFPATRKANNDITSITSNGGRVNCMQVWPPIGKKKFETLSYLPDLTDSELAKEVDYLIRNKWIPCVEFELEHGFVYREHGNSPGYYDGRYWTMWKLPLFGCTDSAQVLKEVEECKKEYPNAFIRIIGFDNTRQVQCISFIAYKPPSFTG.

The transit peptide at 1–54 directs the protein to the chloroplast; sequence MASSMLSSATMVASPAQATMVAPFNGLKSSAAFPATRKANNDITSITSNGGRVN. At S113 the chain carries Phosphoserine.

Belongs to the RuBisCO small chain family. As to quaternary structure, heterohexadecamer of 8 large and 8 small subunits.

It localises to the plastid. Its subcellular location is the chloroplast membrane. The protein localises to the chloroplast stroma. In terms of biological role, ruBisCO catalyzes two reactions: the carboxylation of D-ribulose 1,5-bisphosphate, the primary event in carbon dioxide fixation, as well as the oxidative fragmentation of the pentose substrate. Both reactions occur simultaneously and in competition at the same active site. Although the small subunit is not catalytic it is essential for maximal activity. The sequence is that of Ribulose bisphosphate carboxylase small subunit 1A, chloroplastic (RBCS-1A) from Arabidopsis thaliana (Mouse-ear cress).